We begin with the raw amino-acid sequence, 497 residues long: Acetyl-coenzyme A carboxylase carboxyl transferase subunit beta, chloroplastic (497 aa).

The CoA carboxyltransferase N-terminal domain occupies L225 to D497. Zn(2+) contacts are provided by C229, C232, C248, and C251. The C4-type zinc finger occupies C229–C251.

It belongs to the AccD/PCCB family. In terms of assembly, acetyl-CoA carboxylase is a heterohexamer composed of biotin carboxyl carrier protein, biotin carboxylase and 2 subunits each of ACCase subunit alpha and ACCase plastid-coded subunit beta (accD). Zn(2+) serves as cofactor.

The protein resides in the plastid. It localises to the chloroplast stroma. The enzyme catalyses N(6)-carboxybiotinyl-L-lysyl-[protein] + acetyl-CoA = N(6)-biotinyl-L-lysyl-[protein] + malonyl-CoA. It functions in the pathway lipid metabolism; malonyl-CoA biosynthesis; malonyl-CoA from acetyl-CoA: step 1/1. Functionally, component of the acetyl coenzyme A carboxylase (ACC) complex. Biotin carboxylase (BC) catalyzes the carboxylation of biotin on its carrier protein (BCCP) and then the CO(2) group is transferred by the transcarboxylase to acetyl-CoA to form malonyl-CoA. The sequence is that of Acetyl-coenzyme A carboxylase carboxyl transferase subunit beta, chloroplastic from Phalaenopsis aphrodite subsp. formosana (Moth orchid).